The chain runs to 276 residues: Non-homologous end joining protein Ku (276 aa).

The 167-residue stretch at 11-177 folds into the Ku domain; the sequence is ISFGLVHIPI…PEEIRSMEPL (167 aa). The interval 256 to 276 is disordered; sequence QVKTQQKKEAAPKKERRRKTS.

Belongs to the prokaryotic Ku family. As to quaternary structure, homodimer. Interacts with LigD.

In terms of biological role, with LigD forms a non-homologous end joining (NHEJ) DNA repair enzyme, which repairs dsDNA breaks with reduced fidelity. Binds linear dsDNA with 5'- and 3'- overhangs but not closed circular dsDNA nor ssDNA. Recruits and stimulates the ligase activity of LigD. This Heliobacterium modesticaldum (strain ATCC 51547 / Ice1) protein is Non-homologous end joining protein Ku.